The primary structure comprises 185 residues: Inner membrane-spanning protein YciB (185 aa).

The next 5 membrane-spanning stretches (helical) occupy residues 27-47 (IVLVVATILQIVILKWKYGIV), 53-73 (IMASAVVFFGLLTAYFNEIRY), 76-96 (WKVTIINGLFAIVLLVAQFQF), 118-138 (TLNLGWALFFIICMLVNIYIS), and 149-169 (FKSFGIIGMTVIATIISGVYI).

It belongs to the YciB family.

The protein localises to the cell inner membrane. Its function is as follows. Plays a role in cell envelope biogenesis, maintenance of cell envelope integrity and membrane homeostasis. The chain is Inner membrane-spanning protein YciB from Haemophilus influenzae (strain 86-028NP).